A 350-amino-acid chain; its full sequence is Biotin synthase (350 aa).

The Radical SAM core domain maps to 38 to 256 (NYVQVSTLLS…IAVARIMMPT (219 aa)). Cysteine 53, cysteine 57, and cysteine 60 together coordinate [4Fe-4S] cluster. Residues cysteine 97, cysteine 128, cysteine 188, and arginine 260 each coordinate [2Fe-2S] cluster.

This sequence belongs to the radical SAM superfamily. Biotin synthase family. Homodimer. It depends on [4Fe-4S] cluster as a cofactor. [2Fe-2S] cluster serves as cofactor.

It catalyses the reaction (4R,5S)-dethiobiotin + (sulfur carrier)-SH + 2 reduced [2Fe-2S]-[ferredoxin] + 2 S-adenosyl-L-methionine = (sulfur carrier)-H + biotin + 2 5'-deoxyadenosine + 2 L-methionine + 2 oxidized [2Fe-2S]-[ferredoxin]. It functions in the pathway cofactor biosynthesis; biotin biosynthesis; biotin from 7,8-diaminononanoate: step 2/2. Catalyzes the conversion of dethiobiotin (DTB) to biotin by the insertion of a sulfur atom into dethiobiotin via a radical-based mechanism. This is Biotin synthase from Vibrio vulnificus (strain CMCP6).